The following is a 92-amino-acid chain: Signal recognition particle 19 kDa protein (92 aa).

The protein belongs to the SRP19 family. In terms of assembly, part of the signal recognition particle protein translocation system, which is composed of SRP and FtsY. Archaeal SRP consists of a 7S RNA molecule of 300 nucleotides and two protein subunits: SRP54 and SRP19.

Its subcellular location is the cytoplasm. Involved in targeting and insertion of nascent membrane proteins into the cytoplasmic membrane. Binds directly to 7S RNA and mediates binding of the 54 kDa subunit of the SRP. This is Signal recognition particle 19 kDa protein from Haloferax volcanii (strain ATCC 29605 / DSM 3757 / JCM 8879 / NBRC 14742 / NCIMB 2012 / VKM B-1768 / DS2) (Halobacterium volcanii).